The sequence spans 219 residues: NAD(P)H-quinone oxidoreductase subunit K 2 (219 aa).

Residues Cys-53, Cys-54, Cys-118, and Cys-149 each coordinate [4Fe-4S] cluster.

This sequence belongs to the complex I 20 kDa subunit family. NDH-1 can be composed of about 15 different subunits; different subcomplexes with different compositions have been identified which probably have different functions. [4Fe-4S] cluster is required as a cofactor.

It localises to the cellular thylakoid membrane. It catalyses the reaction a plastoquinone + NADH + (n+1) H(+)(in) = a plastoquinol + NAD(+) + n H(+)(out). The enzyme catalyses a plastoquinone + NADPH + (n+1) H(+)(in) = a plastoquinol + NADP(+) + n H(+)(out). Its function is as follows. NDH-1 shuttles electrons from an unknown electron donor, via FMN and iron-sulfur (Fe-S) centers, to quinones in the respiratory and/or the photosynthetic chain. The immediate electron acceptor for the enzyme in this species is believed to be plastoquinone. Couples the redox reaction to proton translocation, and thus conserves the redox energy in a proton gradient. Cyanobacterial NDH-1 also plays a role in inorganic carbon-concentration. The chain is NAD(P)H-quinone oxidoreductase subunit K 2 from Synechocystis sp. (strain ATCC 27184 / PCC 6803 / Kazusa).